The chain runs to 476 residues: Probable cytosolic Fe-S cluster assembly factor GH10760 (476 aa).

Residues C23, C68, C71, C74, C187, C243, C395, and C399 each coordinate [4Fe-4S] cluster.

This sequence belongs to the NARF family.

Component of the cytosolic iron-sulfur (Fe/S) protein assembly machinery. Required for maturation of extramitochondrial Fe/S proteins. The sequence is that of Probable cytosolic Fe-S cluster assembly factor GH10760 from Drosophila grimshawi (Hawaiian fruit fly).